The primary structure comprises 464 residues: Probable 3-ketoacyl-CoA synthase 21 (464 aa).

Residues 21-41 traverse the membrane as a helical segment; it reads LLSSGVSVFEIFAGLLVVHLI. One can recognise an FAE domain in the interval 42–333; the sequence is YQRIRTRVKV…VIQHILCKKL (292 aa). Active-site residues include cysteine 187, histidine 352, histidine 356, histidine 385, and asparagine 389.

Belongs to the thiolase-like superfamily. Chalcone/stilbene synthases family. As to expression, expressed in flowers.

It localises to the membrane. The enzyme catalyses a very-long-chain acyl-CoA + malonyl-CoA + H(+) = a very-long-chain 3-oxoacyl-CoA + CO2 + CoA. Its pathway is lipid metabolism; fatty acid biosynthesis. This chain is Probable 3-ketoacyl-CoA synthase 21, found in Arabidopsis thaliana (Mouse-ear cress).